We begin with the raw amino-acid sequence, 96 residues long: UPF0235 protein NT01EI_0281 (96 aa).

This sequence belongs to the UPF0235 family.

The sequence is that of UPF0235 protein NT01EI_0281 from Edwardsiella ictaluri (strain 93-146).